The sequence spans 303 residues: Probable cell division protein WhiA (303 aa).

A DNA-binding region (H-T-H motif) is located at residues 272–303; the sequence is SIQQVADALEFPITKSGVNHRLRKINKIADDL.

It belongs to the WhiA family.

Its function is as follows. Involved in cell division and chromosome segregation. This Streptococcus pyogenes serotype M3 (strain ATCC BAA-595 / MGAS315) protein is Probable cell division protein WhiA.